Reading from the N-terminus, the 85-residue chain is UPF0297 protein Cbei_1105 (85 aa).

It belongs to the UPF0297 family.

This chain is UPF0297 protein Cbei_1105, found in Clostridium beijerinckii (strain ATCC 51743 / NCIMB 8052) (Clostridium acetobutylicum).